We begin with the raw amino-acid sequence, 327 residues long: Clavesin-2 (327 aa).

The 162-residue stretch at 96–257 folds into the CRAL-TRIO domain; the sequence is IKQALKDGFP…EFGGMLPPYD (162 aa). The tract at residues 289–327 is disordered; it reads DKELSPKSMKRSQSVVDPTALKRMDKSEEENMQPLLALD.

In terms of assembly, forms a complex with clathrin heavy chain and gamma-adaptin.

Its subcellular location is the golgi apparatus. It is found in the trans-Golgi network membrane. It localises to the early endosome membrane. The protein localises to the cytoplasmic vesicle. The protein resides in the clathrin-coated vesicle. Required for normal morphology of late endosomes and/or lysosomes in neurons. Binds phosphatidylinositol 3,5-bisphosphate (PtdIns(3,5)P2). The polypeptide is Clavesin-2 (Clvs2) (Mus musculus (Mouse)).